The following is a 365-amino-acid chain: Ribosomal RNA large subunit methyltransferase M (365 aa).

Residues Ser-194, 227 to 230 (CPGG), Asp-246, Asp-266, and Asp-284 contribute to the S-adenosyl-L-methionine site. Lys-313 functions as the Proton acceptor in the catalytic mechanism.

The protein belongs to the class I-like SAM-binding methyltransferase superfamily. RNA methyltransferase RlmE family. RlmM subfamily. As to quaternary structure, monomer.

It localises to the cytoplasm. It carries out the reaction cytidine(2498) in 23S rRNA + S-adenosyl-L-methionine = 2'-O-methylcytidine(2498) in 23S rRNA + S-adenosyl-L-homocysteine + H(+). Its function is as follows. Catalyzes the 2'-O-methylation at nucleotide C2498 in 23S rRNA. The chain is Ribosomal RNA large subunit methyltransferase M from Pasteurella multocida (strain Pm70).